A 160-amino-acid chain; its full sequence is Transcription elongation factor GreA (160 aa).

The stretch at 14-76 forms a coiled coil; sequence VKKLEEELEY…QLENMLKNAS (63 aa).

It belongs to the GreA/GreB family.

Functionally, necessary for efficient RNA polymerase transcription elongation past template-encoded arresting sites. The arresting sites in DNA have the property of trapping a certain fraction of elongating RNA polymerases that pass through, resulting in locked ternary complexes. Cleavage of the nascent transcript by cleavage factors such as GreA or GreB allows the resumption of elongation from the new 3'terminus. GreA releases sequences of 2 to 3 nucleotides. This is Transcription elongation factor GreA from Clostridium botulinum (strain Okra / Type B1).